The following is a 276-amino-acid chain: MPVRRYKPVTSSTRHRVVIDYKSVITKTEPEKSLLAPLKKSGGRNNAGRISVRFRGGGHKRRYRIIDFKRDKDGIPGKITSIEYDPNRTAFIALVTYADGEKRYILAPDEIEVGDVIISGEEAPIRVGNALPLSKIPTGTTIHNIELYPGRGGQLVRSAGTWAQLMAKEGDYAHVRLPSGEIRLINVKCKATIGRVSNLDHENVSSGKAGRTRWLGRRPQVRGTAMNPVDHPHGGGEGKSPIGHPSPLSPWGWKTLGWKTRRGKKPSDKFIVKRRK.

The segment at 203–276 (NVSSGKAGRT…SDKFIVKRRK (74 aa)) is disordered. Residues 210-220 (GRTRWLGRRPQ) are compositionally biased toward basic residues. Over residues 265 to 276 (KPSDKFIVKRRK) the composition is skewed to basic and acidic residues.

This sequence belongs to the universal ribosomal protein uL2 family. Part of the 50S ribosomal subunit. Forms a bridge to the 30S subunit in the 70S ribosome.

One of the primary rRNA binding proteins. Required for association of the 30S and 50S subunits to form the 70S ribosome, for tRNA binding and peptide bond formation. It has been suggested to have peptidyltransferase activity; this is somewhat controversial. Makes several contacts with the 16S rRNA in the 70S ribosome. This is Large ribosomal subunit protein uL2 from Coprothermobacter proteolyticus (strain ATCC 35245 / DSM 5265 / OCM 4 / BT).